The following is a 176-amino-acid chain: ATP synthase subunit delta (176 aa).

It belongs to the ATPase delta chain family. In terms of assembly, F-type ATPases have 2 components, F(1) - the catalytic core - and F(0) - the membrane proton channel. F(1) has five subunits: alpha(3), beta(3), gamma(1), delta(1), epsilon(1). F(0) has three main subunits: a(1), b(2) and c(10-14). The alpha and beta chains form an alternating ring which encloses part of the gamma chain. F(1) is attached to F(0) by a central stalk formed by the gamma and epsilon chains, while a peripheral stalk is formed by the delta and b chains.

It is found in the cell membrane. In terms of biological role, f(1)F(0) ATP synthase produces ATP from ADP in the presence of a proton or sodium gradient. F-type ATPases consist of two structural domains, F(1) containing the extramembraneous catalytic core and F(0) containing the membrane proton channel, linked together by a central stalk and a peripheral stalk. During catalysis, ATP synthesis in the catalytic domain of F(1) is coupled via a rotary mechanism of the central stalk subunits to proton translocation. Its function is as follows. This protein is part of the stalk that links CF(0) to CF(1). It either transmits conformational changes from CF(0) to CF(1) or is implicated in proton conduction. The chain is ATP synthase subunit delta from Wigglesworthia glossinidia brevipalpis.